Here is a 282-residue protein sequence, read N- to C-terminus: NADPH-dependent 7-cyano-7-deazaguanine reductase (282 aa).

88 to 90 (IES) contacts substrate. 90–91 (SK) is a binding site for NADPH. The active-site Thioimide intermediate is Cys190. The active-site Proton donor is the Asp197. 229-230 (HE) contacts substrate. 258 to 259 (RG) serves as a coordination point for NADPH.

It belongs to the GTP cyclohydrolase I family. QueF type 2 subfamily. In terms of assembly, homodimer.

It is found in the cytoplasm. The catalysed reaction is 7-aminomethyl-7-carbaguanine + 2 NADP(+) = 7-cyano-7-deazaguanine + 2 NADPH + 3 H(+). It functions in the pathway tRNA modification; tRNA-queuosine biosynthesis. Its function is as follows. Catalyzes the NADPH-dependent reduction of 7-cyano-7-deazaguanine (preQ0) to 7-aminomethyl-7-deazaguanine (preQ1). The sequence is that of NADPH-dependent 7-cyano-7-deazaguanine reductase from Escherichia coli O45:K1 (strain S88 / ExPEC).